The chain runs to 966 residues: Mitogen-activated protein kinase kinase kinase 13 (966 aa).

2 disordered regions span residues 1–22 and 93–112; these read MANF…SESK and SEMA…STSG. The span at 96 to 112 shows a compositional bias: polar residues; that stretch reads AVSQGNSNTVDAESTSG. The Protein kinase domain maps to 168-409; that stretch reads ISELQWLGSG…FRQTLMHLDI (242 aa). ATP contacts are provided by residues 174-182 and lysine 195; that span reads LGSGAQGAV. Residue aspartate 279 is the Proton acceptor of the active site. Leucine-zipper stretches follow at residues 433–454 and 486–507; these read VKKH…DEEL and LSAI…EQAV. 4 disordered regions span residues 534–652, 744–834, 846–873, and 887–906; these read KRKG…SQSH, DIPS…RRQR, STFS…PDEL, and DLLS…SDGL. Positions 567–581 are enriched in low complexity; it reads SPLSGSPKMSTSSSK. Residues 582 to 594 show a composition bias toward basic residues; sequence SRYRSKPRHRRGN. 2 stretches are compositionally biased toward polar residues: residues 609-629 and 781-795; these read QPAQ…SQYP and FSSC…TSHL. Acidic residues predominate over residues 814–827; it reads DSSEEEEGEVDSEV. The acidic stretch occupies residues 815–828; the sequence is SSEEEEGEVDSEVE. A compositionally biased stretch (polar residues) spans 846–855; it reads STFSSENFSV.

It belongs to the protein kinase superfamily. STE Ser/Thr protein kinase family. MAP kinase kinase kinase subfamily. As to quaternary structure, homodimer; forms dimers through the leucine-zipper motif. Interacts with the C-terminus of MAPK8IP1 through the kinase catalytic domain. Binds PRDX3. Associates with the IKK complex through the kinase domain. Mg(2+) serves as cofactor. Autophosphorylated on serine and threonine residues.

It is found in the cytoplasm. It localises to the membrane. The enzyme catalyses L-seryl-[protein] + ATP = O-phospho-L-seryl-[protein] + ADP + H(+). It carries out the reaction L-threonyl-[protein] + ATP = O-phospho-L-threonyl-[protein] + ADP + H(+). Activated by autophosphorylation and homodimerization. Functionally, activates the JUN N-terminal pathway through activation of the MAP kinase kinase MAP2K7. Acts synergistically with PRDX3 to regulate the activation of NF-kappa-B in the cytosol. This activation is kinase-dependent and involves activating the IKK complex, the IKBKB-containing complex that phosphorylates inhibitors of NF-kappa-B. This Pongo abelii (Sumatran orangutan) protein is Mitogen-activated protein kinase kinase kinase 13.